The following is a 304-amino-acid chain: Protein translocase subunit SecF (304 aa).

The next 6 membrane-spanning stretches (helical) occupy residues 20–40, 143–163, 164–184, 195–215, 244–266, and 276–298; these read AKLF…LIFT, AMMA…IRFE, LIFA…TLGF, TVVA…IVVF, LSRT…IFGG, and LVIG…VYLI.

It belongs to the SecD/SecF family. SecF subfamily. In terms of assembly, forms a complex with SecD. Part of the essential Sec protein translocation apparatus which comprises SecA, SecYEG and auxiliary proteins SecDF. Other proteins may also be involved.

Its subcellular location is the cell inner membrane. Functionally, part of the Sec protein translocase complex. Interacts with the SecYEG preprotein conducting channel. SecDF uses the proton motive force (PMF) to complete protein translocation after the ATP-dependent function of SecA. The chain is Protein translocase subunit SecF from Calditerrivibrio nitroreducens (strain DSM 19672 / NBRC 101217 / Yu37-1).